The chain runs to 291 residues: Alpha/beta-gliadin A-II (291 aa).

Positions 1-20 (MKTFPILALLAIVATTATTA) are cleaved as a signal peptide. A compositionally biased stretch (low complexity) spans 32 to 55 (NPSQQQPQEQVPLVQEQQFQGQQQ). 2 disordered regions span residues 32–120 (NPSQ…QQQQ) and 227–250 (QQYP…GSFQ). Composition is skewed to pro residues over residues 56-71 (PFPP…PFPS) and 81-104 (FPQP…PQPQ). 2 stretches are compositionally biased toward low complexity: residues 105–120 (PQYS…QQQQ) and 227–237 (QQYPSGQGFFQ). Residues 238–250 (PSQQNPQAQGSFQ) are compositionally biased toward polar residues.

Belongs to the gliadin/glutenin family. Post-translationally, substrate of transglutaminase.

Its function is as follows. Gliadin is the major seed storage protein in wheat. The protein is Alpha/beta-gliadin A-II of Triticum aestivum (Wheat).